A 500-amino-acid polypeptide reads, in one-letter code: Maturase K (500 aa).

It belongs to the intron maturase 2 family. MatK subfamily.

The protein localises to the plastid. It localises to the chloroplast. Functionally, usually encoded in the trnK tRNA gene intron. Probably assists in splicing its own and other chloroplast group II introns. In Argentina anserina (Silverweed cinquefoil), this protein is Maturase K.